The primary structure comprises 572 residues: MYRPSCLSYVLLVANMWSFAVCANAFIYGSYDPSHNIPIVALMTLCATGLWLSTSVVSFGIRYVRVRVSPEKTQNRTIYVSSGLPHFDPVYGVVKKCEPMGGGPAIELQVNPSWIHLLPTSPAINKVEVGQESAILGSTYSVVETGGEPKSLVAVKSGDSTLGFGARVYHEGMDVLMVPHHVWYNDKPHTALAKNGRSVDTEDWEVEAACADPRIDFVLVKVPTAVWAKLAVRSTKVLAPVHGTAVQTFGGQDSKQLFSGLGKAKALDNAWEFTHTAPTAKGWSGTPLYTRDGIVGMHTGYVDIGTSNRAINMHFIMSCLVSKMETLPPELGYREISLEDVGLRSFEFLEVEIENRGKVKLGKREFAWVPKGKAWADMLDDDDLPLPPKMVNGNLVWADAQESFDGALPLNCLRAAGRNVLPPKLNLVTINSPVDPPTKQVACPSEIVDHRLASLEKCLENLLQTLSQPQQKFSQNSLSSGGLKGDQELKLAPCYSKQESLFPPKPRATSSKPITTSSPGTPGRSPLPVSGKELGPSTQSSSKLSRKQRRRRSTKRPVQGSPSPASPPPTRT.

Helical transmembrane passes span 7-27 (LSYVLLVANMWSFAVCANAFI), 37-57 (IPIVALMTLCATGLWLSTSVV), and 77-94 (TIYVSSGLPHFDPVYGVV). The Peptidase S39 domain maps to 135–330 (ILGSTYSVVE…VSKMETLPPE (196 aa)). Catalysis depends on for protease activity residues His181, Asp216, and Ser284. A disordered region spans residues 498–572 (QESLFPPKPR…SPASPPPTRT (75 aa)). The segment covering 508-520 (ATSSKPITTSSPG) has biased composition (polar residues). A compositionally biased stretch (basic residues) spans 544-555 (LSRKQRRRRSTK).

The polyprotein is proteolytically cleaved into several chains by the viral protease.

Its subcellular location is the host membrane. In terms of biological role, responsible for cleavages of polyprotein P2A and replicase polyprotein P2AB. Covalently attached to the 5' extremity of the genomic and subgenomic RNAs. It may serve as a primer for the replicase. The chain is Polyprotein P2A from Southern cowpea mosaic virus (SCPMV).